The sequence spans 324 residues: tRNA dimethylallyltransferase (324 aa).

15 to 22 is an ATP binding site; the sequence is GPTATGKS. 17 to 22 is a substrate binding site; sequence TATGKS. The tract at residues 40-43 is interaction with substrate tRNA; it reads DSAQ.

Belongs to the IPP transferase family. In terms of assembly, monomer. Mg(2+) is required as a cofactor.

The catalysed reaction is adenosine(37) in tRNA + dimethylallyl diphosphate = N(6)-dimethylallyladenosine(37) in tRNA + diphosphate. Catalyzes the transfer of a dimethylallyl group onto the adenine at position 37 in tRNAs that read codons beginning with uridine, leading to the formation of N6-(dimethylallyl)adenosine (i(6)A). This chain is tRNA dimethylallyltransferase, found in Moorella thermoacetica (strain ATCC 39073 / JCM 9320).